We begin with the raw amino-acid sequence, 132 residues long: Large ribosomal subunit protein uL22 (132 aa).

This sequence belongs to the universal ribosomal protein uL22 family. In terms of assembly, part of the 50S ribosomal subunit.

This protein binds specifically to 23S rRNA; its binding is stimulated by other ribosomal proteins, e.g. L4, L17, and L20. It is important during the early stages of 50S assembly. It makes multiple contacts with different domains of the 23S rRNA in the assembled 50S subunit and ribosome. In terms of biological role, the globular domain of the protein is located near the polypeptide exit tunnel on the outside of the subunit, while an extended beta-hairpin is found that lines the wall of the exit tunnel in the center of the 70S ribosome. This is Large ribosomal subunit protein uL22 from Rhodospirillum centenum (strain ATCC 51521 / SW).